A 242-amino-acid polypeptide reads, in one-letter code: Sugar fermentation stimulation protein homolog (242 aa).

Belongs to the SfsA family.

The sequence is that of Sugar fermentation stimulation protein homolog from Rippkaea orientalis (strain PCC 8801 / RF-1) (Cyanothece sp. (strain PCC 8801)).